The following is a 373-amino-acid chain: Cobalt-precorrin-5B C(1)-methyltransferase (373 aa).

Belongs to the CbiD family.

It carries out the reaction Co-precorrin-5B + S-adenosyl-L-methionine = Co-precorrin-6A + S-adenosyl-L-homocysteine. Its pathway is cofactor biosynthesis; adenosylcobalamin biosynthesis; cob(II)yrinate a,c-diamide from sirohydrochlorin (anaerobic route): step 6/10. Functionally, catalyzes the methylation of C-1 in cobalt-precorrin-5B to form cobalt-precorrin-6A. The protein is Cobalt-precorrin-5B C(1)-methyltransferase of Listeria monocytogenes serovar 1/2a (strain ATCC BAA-679 / EGD-e).